The chain runs to 101 residues: DNA-binding protein Fis (101 aa).

The segment at residues Gln-77–Lys-96 is a DNA-binding region (H-T-H motif).

Belongs to the transcriptional regulatory Fis family. As to quaternary structure, homodimer.

Functionally, activates ribosomal RNA transcription. Plays a direct role in upstream activation of rRNA promoters. In Shewanella baltica (strain OS223), this protein is DNA-binding protein Fis.